Consider the following 125-residue polypeptide: MVMLKISSFLAVYALVVCQMDSFQAAPVRPGLESITDRVTLSDYEARRLLNALVKDFIQMTAEELEQASEGNSVTAQKRACNTATCVTHRLADFLSRSGGVGKNNFVPTNVGSKAFGRRRRSVQI.

Residues 1-25 form the signal peptide; sequence MVMLKISSFLAVYALVVCQMDSFQA. A propeptide spanning residues 26–77 is cleaved from the precursor; it reads APVRPGLESITDRVTLSDYEARRLLNALVKDFIQMTAEELEQASEGNSVTAQ. A disulfide bond links cysteine 81 and cysteine 86. At phenylalanine 116 the chain carries Phenylalanine amide. A propeptide spanning residues 122 to 125 is cleaved from the precursor; that stretch reads SVQI.

Belongs to the calcitonin family.

It localises to the secreted. Its function is as follows. CGRP1/CALCA is a peptide hormone that induces vasodilation mediated by the CALCRL-RAMP1 receptor complex. Dilates a variety of vessels including the coronary, cerebral and systemic vasculature. Its abundance in the CNS also points toward a neurotransmitter or neuromodulator role. It also elevates platelet cAMP. CGRP1 can also bind and activate CALCR-RAMP1 (AMYR1) receptor complex. The protein is Calcitonin gene-related peptide 1 (CALCA) of Gallus gallus (Chicken).